A 224-amino-acid chain; its full sequence is UPF0758 protein Pfl01_5539 (224 aa).

Residues 102–224 enclose the MPN domain; it reads ALENPQVVRD…PLSMAECGWM (123 aa). Residues His-173, His-175, and Asp-186 each contribute to the Zn(2+) site. The JAMM motif motif lies at 173–186; it reads HNHPSGNSDPSQAD.

This sequence belongs to the UPF0758 family.

This Pseudomonas fluorescens (strain Pf0-1) protein is UPF0758 protein Pfl01_5539.